A 356-amino-acid chain; its full sequence is UDP-N-acetylglucosamine--N-acetylmuramyl-(pentapeptide) pyrophosphoryl-undecaprenol N-acetylglucosamine transferase (356 aa).

Residues 12-14 (TGG), Asn124, Arg163, Ser188, Ile242, 261-266 (ALTVCE), and Gln287 each bind UDP-N-acetyl-alpha-D-glucosamine.

This sequence belongs to the glycosyltransferase 28 family. MurG subfamily.

It is found in the cell inner membrane. The catalysed reaction is di-trans,octa-cis-undecaprenyl diphospho-N-acetyl-alpha-D-muramoyl-L-alanyl-D-glutamyl-meso-2,6-diaminopimeloyl-D-alanyl-D-alanine + UDP-N-acetyl-alpha-D-glucosamine = di-trans,octa-cis-undecaprenyl diphospho-[N-acetyl-alpha-D-glucosaminyl-(1-&gt;4)]-N-acetyl-alpha-D-muramoyl-L-alanyl-D-glutamyl-meso-2,6-diaminopimeloyl-D-alanyl-D-alanine + UDP + H(+). Its pathway is cell wall biogenesis; peptidoglycan biosynthesis. Its function is as follows. Cell wall formation. Catalyzes the transfer of a GlcNAc subunit on undecaprenyl-pyrophosphoryl-MurNAc-pentapeptide (lipid intermediate I) to form undecaprenyl-pyrophosphoryl-MurNAc-(pentapeptide)GlcNAc (lipid intermediate II). In Stutzerimonas stutzeri (strain A1501) (Pseudomonas stutzeri), this protein is UDP-N-acetylglucosamine--N-acetylmuramyl-(pentapeptide) pyrophosphoryl-undecaprenol N-acetylglucosamine transferase.